We begin with the raw amino-acid sequence, 136 residues long: Preprocaerulein type I' (136 aa).

The N-terminal stretch at 1 to 26 is a signal peptide; the sequence is MFKGILLCVLFAVLSANPLSQPEGFA. Residues 27-136 constitute a propeptide that is removed on maturation; sequence DEERDVRGLA…NALGGAPQQR (110 aa). The segment at 82 to 101 is disordered; that stretch reads GAPQQREANDERRFADDEDD.

Belongs to the gastrin/cholecystokinin family. As to expression, expressed by the skin glands.

The protein resides in the secreted. In terms of biological role, the pharmacological activities of caerulein are quite similar to the physiological activities of gastrin and related peptides. The chain is Preprocaerulein type I' from Xenopus laevis (African clawed frog).